The primary structure comprises 408 residues: Probable fructose-2,6-bisphosphatase C732.02c (408 aa).

Residue 16 to 24 (GLPASGKTS) participates in ATP binding. D88 is a catalytic residue. 127 to 132 (NITDMC) contributes to the ATP binding site. Residue Y157 coordinates beta-D-fructose 6-phosphate. R213 is a beta-D-fructose 2,6-bisphosphate binding site. H214 (tele-phosphohistidine intermediate) is an active-site residue. Beta-D-fructose 2,6-bisphosphate-binding residues include N220 and G226. Catalysis depends on E285, which acts as the Proton donor/acceptor. 6 residues coordinate beta-D-fructose 2,6-bisphosphate: Y296, R310, K314, Y325, Q351, and R355. Residue 307 to 310 (AELR) participates in ATP binding. ATP-binding positions include 351–355 (QAILR) and Y387.

The protein in the C-terminal section; belongs to the phosphoglycerate mutase family.

The enzyme catalyses beta-D-fructose 2,6-bisphosphate + H2O = beta-D-fructose 6-phosphate + phosphate. Its function is as follows. This is predominantly if not solely a fructose-2,6-bisphosphatase. The polypeptide is Probable fructose-2,6-bisphosphatase C732.02c (Schizosaccharomyces pombe (strain 972 / ATCC 24843) (Fission yeast)).